The sequence spans 111 residues: Prefoldin subunit 2 (111 aa).

Coiled coils occupy residues methionine 1–histidine 36 and leucine 72–glutamine 92.

The protein belongs to the prefoldin subunit beta family. Heterohexamer of two PFD-alpha type and four PFD-beta type subunits.

It localises to the cytoplasm. Binds specifically to cytosolic chaperonin (c-CPN) and transfers target proteins to it. Binds to nascent polypeptide chain and promotes folding in an environment in which there are many competing pathways for nonnative proteins. The polypeptide is Prefoldin subunit 2 (GIM4) (Saccharomyces cerevisiae (strain ATCC 204508 / S288c) (Baker's yeast)).